The primary structure comprises 514 residues: Peptide chain release factor 3 (514 aa).

In terms of domain architecture, tr-type G spans 8–268 (KKRRTFAIIS…TFLKFAPEPH (261 aa)). Residues 17–24 (SHPDAGKT), 85–89 (DTPGH), and 139–142 (NKLD) each bind GTP.

Belongs to the TRAFAC class translation factor GTPase superfamily. Classic translation factor GTPase family. PrfC subfamily.

The protein localises to the cytoplasm. Increases the formation of ribosomal termination complexes and stimulates activities of RF-1 and RF-2. It binds guanine nucleotides and has strong preference for UGA stop codons. It may interact directly with the ribosome. The stimulation of RF-1 and RF-2 is significantly reduced by GTP and GDP, but not by GMP. The protein is Peptide chain release factor 3 of Streptococcus gordonii (strain Challis / ATCC 35105 / BCRC 15272 / CH1 / DL1 / V288).